A 122-amino-acid chain; its full sequence is Large ribosomal subunit protein uL14c (122 aa).

Belongs to the universal ribosomal protein uL14 family. Part of the 50S ribosomal subunit.

The protein resides in the plastid. It is found in the chloroplast. Functionally, binds to 23S rRNA. This is Large ribosomal subunit protein uL14c from Lotus japonicus (Lotus corniculatus var. japonicus).